The sequence spans 447 residues: Divalent metal cation transporter MntH (447 aa).

Helical transmembrane passes span 26-48 (AGFW…GYMD), 65-85 (TLLS…AMSA), 108-128 (GFLL…AEII), 140-160 (IPLI…LLLM), 169-189 (AIVA…VLLS), 212-232 (MLYL…LYLG), 264-284 (LFLA…LFYG), 304-324 (IVGA…LLAS), 359-379 (VLSV…EAKI), 383-403 (LTFS…PLVI), and 426-446 (TATI…LGLI).

This sequence belongs to the NRAMP family.

The protein localises to the cell membrane. In terms of biological role, h(+)-stimulated, divalent metal cation uptake system. This Pediococcus pentosaceus (strain ATCC 25745 / CCUG 21536 / LMG 10740 / 183-1w) protein is Divalent metal cation transporter MntH.